Here is a 428-residue protein sequence, read N- to C-terminus: Spliceosome RNA helicase DDX39B (428 aa).

A compositionally biased stretch (acidic residues) spans 1-19 (MAENDVDNELLDYEDDEVE). Residues 1 to 31 (MAENDVDNELLDYEDDEVETAAGGDGAEAPA) form a disordered region. An N-acetylalanine modification is found at Ala2. At Lys36 the chain carries N6-acetyllysine; alternate. Lys36 is covalently cross-linked (Glycyl lysine isopeptide (Lys-Gly) (interchain with G-Cter in SUMO2); alternate). A phosphoserine mark is found at Ser38 and Ser41. Residues 45 to 73 (SGFRDFLLKPELLRAIVDCGFEHPSEVQH) carry the Q motif motif. Residues 76-249 (IPQAILGMDV…RKFMQDPMEI (174 aa)) form the Helicase ATP-binding domain. 89–96 (AKSGMGKT) provides a ligand contact to ATP. At Thr172 the chain carries Phosphothreonine. Residues 196–199 (DECD) carry the DECD box motif. Residues 261 to 422 (GLQQYYVKLK…ELPDEIDISS (162 aa)) enclose the Helicase C-terminal domain.

This sequence belongs to the DEAD box helicase family. DECD subfamily. Homodimer, and heterodimer with DDX39A. DDX39B interacts with the THO subcomplex to form the THO-DDX39B complex which multimerizes into a 28-subunit tetrameric assembly. Component of the transcription/export (TREX) complex at least composed of ALYREF/THOC4, DDX39B, SARNP/CIP29, CHTOP and the THO subcomplex; in the complex interacts with THOC2. THOC1-THOC2-THOC3-DDX39B subcomplex is sufficient for the interaction with export factor NXF1-NXT1. TREX seems to have a dynamic structure involving ATP-dependent remodeling. Within the TREX complex bridges ALYREF/THOC4 and the THO subcomplex, and, in a ATP-dependent manner, ALYREF/THOC4 and SARNP/CIP29. Component of the spliceosome. Interacts directly with U2AF2. Interacts with RBM8A, RNPS1 and SRRM1, FYTTD1/UIF, THOC1, MX1 and POLDIP3. Interacts with LUZP4. Interacts with SARNP/CIP29 (via the C-terminal domain); the interaction is direct and facilitates RNA binding of DDX39B.

It localises to the nucleus. The protein resides in the nucleus speckle. The protein localises to the cytoplasm. The enzyme catalyses ATP + H2O = ADP + phosphate + H(+). Involved in nuclear export of spliced and unspliced mRNA. Component of the TREX complex which is thought to couple mRNA transcription, processing and nuclear export, and specifically associates with spliced mRNA and not with unspliced pre-mRNA. The TREX complex is recruited to spliced mRNAs by a transcription-independent mechanism, binds to mRNA upstream of the exon-junction complex (EJC) and is recruited in a splicing- and cap-dependent manner to a region near the 5' end of the mRNA where it functions in mRNA export to the cytoplasm via the TAP/NXF1 pathway. The THOC1-THOC2-THOC3 core complex alone is sufficient to promote ATPase activity of DDX39B; in the complex THOC2 is the only component that directly interacts with DDX39B. Associates with SARNP/CIP29, which facilitates RNA binding of DDX39B and likely plays a role in mRNA export. May undergo several rounds of ATP hydrolysis during assembly of TREX to drive subsequent loading of components such as ALYREF/THOC4 and CHTOP onto mRNA. Also associates with pre-mRNA independent of ALYREF/THOC4. Involved in the nuclear export of intronless mRNA; the ATP-bound form is proposed to recruit export adapter ALYREF/THOC4 to intronless mRNA; its ATPase activity is cooperatively stimulated by RNA and ALYREF/THOC4 and ATP hydrolysis is thought to trigger the dissociation from RNA to allow the association of ALYREF/THOC4 and the NXF1-NXT1 heterodimer. Involved in transcription elongation and genome stability. In terms of biological role, splice factor that is required for the first ATP-dependent step in spliceosome assembly and for the interaction of U2 snRNP with the branchpoint. Has both RNA-stimulated ATP binding/hydrolysis activity and ATP-dependent RNA unwinding activity. Even with the stimulation of RNA, the ATPase activity is weak. Can only hydrolyze ATP but not other NTPs. The RNA stimulation of ATPase activity does not have a strong preference for the sequence and length of the RNA. However, ssRNA stimulates the ATPase activity much more strongly than dsRNA. Can unwind 5' or 3' overhangs or blunt end RNA duplexes in vitro. The ATPase and helicase activities are not influenced by U2AF2; the effect of ALYREF/THOC4 is reported conflictingly. This is Spliceosome RNA helicase DDX39B (DDX39B) from Bos taurus (Bovine).